The following is a 366-amino-acid chain: Carbamoyl phosphate synthase small chain (366 aa).

The tract at residues 1–170 is CPSase; that stretch reads MLKKRYLVLE…TKSPYVSTGY (170 aa). The L-glutamine site is built by serine 47, glycine 221, and glycine 223. The Glutamine amidotransferase type-1 domain occupies 173 to 360; the sequence is SVVLVDFGKK…IDMINEYKTK (188 aa). Cysteine 248 acts as the Nucleophile in catalysis. Leucine 249, glutamine 252, asparagine 290, glycine 292, and tyrosine 293 together coordinate L-glutamine. Active-site residues include histidine 333 and glutamate 335.

This sequence belongs to the CarA family. As to quaternary structure, composed of two chains; the small (or glutamine) chain promotes the hydrolysis of glutamine to ammonia, which is used by the large (or ammonia) chain to synthesize carbamoyl phosphate. Tetramer of heterodimers (alpha,beta)4.

The catalysed reaction is hydrogencarbonate + L-glutamine + 2 ATP + H2O = carbamoyl phosphate + L-glutamate + 2 ADP + phosphate + 2 H(+). The enzyme catalyses L-glutamine + H2O = L-glutamate + NH4(+). The protein operates within amino-acid biosynthesis; L-arginine biosynthesis; carbamoyl phosphate from bicarbonate: step 1/1. It participates in pyrimidine metabolism; UMP biosynthesis via de novo pathway; (S)-dihydroorotate from bicarbonate: step 1/3. Its function is as follows. Small subunit of the glutamine-dependent carbamoyl phosphate synthetase (CPSase). CPSase catalyzes the formation of carbamoyl phosphate from the ammonia moiety of glutamine, carbonate, and phosphate donated by ATP, constituting the first step of 2 biosynthetic pathways, one leading to arginine and/or urea and the other to pyrimidine nucleotides. The small subunit (glutamine amidotransferase) binds and cleaves glutamine to supply the large subunit with the substrate ammonia. The sequence is that of Carbamoyl phosphate synthase small chain from Staphylococcus saprophyticus subsp. saprophyticus (strain ATCC 15305 / DSM 20229 / NCIMB 8711 / NCTC 7292 / S-41).